Here is a 197-residue protein sequence, read N- to C-terminus: Xanthine phosphoribosyltransferase (197 aa).

2 residues coordinate xanthine: Leu-20 and Asn-27. Ala-128–Ala-132 provides a ligand contact to 5-phospho-alpha-D-ribose 1-diphosphate. Lys-156 is a xanthine binding site.

The protein belongs to the purine/pyrimidine phosphoribosyltransferase family. Xpt subfamily. In terms of assembly, homodimer.

The protein localises to the cytoplasm. It carries out the reaction XMP + diphosphate = xanthine + 5-phospho-alpha-D-ribose 1-diphosphate. Its pathway is purine metabolism; XMP biosynthesis via salvage pathway; XMP from xanthine: step 1/1. Functionally, converts the preformed base xanthine, a product of nucleic acid breakdown, to xanthosine 5'-monophosphate (XMP), so it can be reused for RNA or DNA synthesis. This Bacillus cereus (strain ATCC 14579 / DSM 31 / CCUG 7414 / JCM 2152 / NBRC 15305 / NCIMB 9373 / NCTC 2599 / NRRL B-3711) protein is Xanthine phosphoribosyltransferase.